A 471-amino-acid polypeptide reads, in one-letter code: Heat shock 70 kDa protein 13 (471 aa).

The signal sequence occupies residues 1 to 22 (MAGEMTILGSAVLTLLLAGYLA). An N-linked (GlcNAc...) asparagine glycan is attached at Asn-184. A disordered region spans residues 316 to 339 (NDSQKPQNADSKLPEDQLTPGDGH).

The protein belongs to the heat shock protein 70 family. In terms of assembly, binds UBQLN2.

It is found in the microsome. The protein resides in the endoplasmic reticulum. Has peptide-independent ATPase activity. This chain is Heat shock 70 kDa protein 13 (Hspa13), found in Rattus norvegicus (Rat).